Here is a 208-residue protein sequence, read N- to C-terminus: ATP-dependent Clp protease proteolytic subunit (208 aa).

The active-site Nucleophile is Ser106. Residue His131 is part of the active site.

Belongs to the peptidase S14 family. As to quaternary structure, fourteen ClpP subunits assemble into 2 heptameric rings which stack back to back to give a disk-like structure with a central cavity, resembling the structure of eukaryotic proteasomes.

Its subcellular location is the cytoplasm. The catalysed reaction is Hydrolysis of proteins to small peptides in the presence of ATP and magnesium. alpha-casein is the usual test substrate. In the absence of ATP, only oligopeptides shorter than five residues are hydrolyzed (such as succinyl-Leu-Tyr-|-NHMec, and Leu-Tyr-Leu-|-Tyr-Trp, in which cleavage of the -Tyr-|-Leu- and -Tyr-|-Trp bonds also occurs).. Cleaves peptides in various proteins in a process that requires ATP hydrolysis. Has a chymotrypsin-like activity. Plays a major role in the degradation of misfolded proteins. The sequence is that of ATP-dependent Clp protease proteolytic subunit from Dinoroseobacter shibae (strain DSM 16493 / NCIMB 14021 / DFL 12).